We begin with the raw amino-acid sequence, 105 residues long: Small ribosomal subunit protein uS10 (105 aa).

The protein belongs to the universal ribosomal protein uS10 family. As to quaternary structure, part of the 30S ribosomal subunit.

Functionally, involved in the binding of tRNA to the ribosomes. The polypeptide is Small ribosomal subunit protein uS10 (Oleidesulfovibrio alaskensis (strain ATCC BAA-1058 / DSM 17464 / G20) (Desulfovibrio alaskensis)).